Reading from the N-terminus, the 331-residue chain is Putative sigma L-dependent transcriptional regulator YplP (331 aa).

One can recognise a Sigma-54 factor interaction domain in the interval His-12–Ala-213. Ala-95–Asp-104 contacts ATP.

Functionally, may play a role in cold adaptation. This chain is Putative sigma L-dependent transcriptional regulator YplP (yplP), found in Bacillus subtilis (strain 168).